Here is a 598-residue protein sequence, read N- to C-terminus: Aspartate--tRNA ligase (598 aa).

E182 provides a ligand contact to L-aspartate. Residues 206–209 are aspartate; it reads QLFK. R228 serves as a coordination point for L-aspartate. ATP contacts are provided by residues 228 to 230 and Q237; that span reads RDE. H456 is an L-aspartate binding site. Position 490 (E490) interacts with ATP. R497 contributes to the L-aspartate binding site. An ATP-binding site is contributed by 542–545; the sequence is GVDR.

It belongs to the class-II aminoacyl-tRNA synthetase family. Type 1 subfamily. As to quaternary structure, homodimer.

It is found in the cytoplasm. The catalysed reaction is tRNA(Asp) + L-aspartate + ATP = L-aspartyl-tRNA(Asp) + AMP + diphosphate. Functionally, catalyzes the attachment of L-aspartate to tRNA(Asp) in a two-step reaction: L-aspartate is first activated by ATP to form Asp-AMP and then transferred to the acceptor end of tRNA(Asp). This chain is Aspartate--tRNA ligase, found in Agathobacter rectalis (strain ATCC 33656 / DSM 3377 / JCM 17463 / KCTC 5835 / VPI 0990) (Eubacterium rectale).